A 514-amino-acid polypeptide reads, in one-letter code: Cytochrome P450 monooxygenase aneD (514 aa).

A helical transmembrane segment spans residues 6 to 26 (ICTLLAVIATTSLGLLFLSII). N-linked (GlcNAc...) asparagine glycans are attached at residues Asn-113, Asn-261, and Asn-347. Cys-424 contacts heme.

Belongs to the cytochrome P450 family. Heme serves as cofactor.

The protein resides in the membrane. It catalyses the reaction asperaculane D + reduced [NADPH--hemoprotein reductase] + O2 = asperaculane E + oxidized [NADPH--hemoprotein reductase] + H2O + H(+). The protein operates within secondary metabolite biosynthesis. In terms of biological role, cytochrome P450 monooxygenase; part of the gene cluster that mediates the biosynthesis of aculenes, a unique type of norsesquiterpenes that contain a nordaucane skeleton linked to an L-proline moiety and are of mixed biosynthetic origin. The pathway begins with the synthesis of dauca-4,7-diene by the terpene cyclase aneC using farnesyl pyrophosphate (FPP) as substrate. The cytochrome P450 monooxygenase aneF then performs the initial oxidation at C-12 of dauca-4,7-diene to yield asperaculane D. Asperaculane D is substrate of the cytochrome P450 monooxygenase aneD for C-10 hydroxylation to yield asperaculane E. The cytochrome P450 monooxygenase aneG then converts asperaculane E into aculene D via C-2 oxidation. The monomodular nonribosomal peptide synthtase aneB adenylates L-proline and the thiohydrolase aneE transfers this activated L-proline derivative to aculenes D and C to produce respectively aculenes B and A. The dioxygenase aneA converts aculene D into aculene C, and aculene B into aculene A by introducing the 5,6-alkene moiety. Asperculanes A, B, C and F, as well as 14-prolyl asperculane C, might be shunt products of the pathway. In Aspergillus aculeatus (strain ATCC 16872 / CBS 172.66 / WB 5094), this protein is Cytochrome P450 monooxygenase aneD.